We begin with the raw amino-acid sequence, 190 residues long: Elongation factor P-like protein (190 aa).

It belongs to the elongation factor P family.

The sequence is that of Elongation factor P-like protein from Pseudoalteromonas translucida (strain TAC 125).